The following is a 367-amino-acid chain: Phospho-N-acetylmuramoyl-pentapeptide-transferase (367 aa).

The next 10 helical transmembrane spans lie at 27 to 47, 73 to 93, 97 to 117, 132 to 152, 167 to 187, 200 to 220, 237 to 257, 264 to 284, 289 to 309, and 344 to 364; these read VLAA…VIRW, TMGG…WGDL, YVWT…YDDW, WKFF…AFSA, TMAY…VIVG, GLAI…AYVT, AGEL…FLWF, VFMG…VAVI, IVLL…MLQV, and QVVV…LSTL.

This sequence belongs to the glycosyltransferase 4 family. MraY subfamily. Mg(2+) is required as a cofactor.

The protein localises to the cell inner membrane. It carries out the reaction UDP-N-acetyl-alpha-D-muramoyl-L-alanyl-gamma-D-glutamyl-meso-2,6-diaminopimeloyl-D-alanyl-D-alanine + di-trans,octa-cis-undecaprenyl phosphate = di-trans,octa-cis-undecaprenyl diphospho-N-acetyl-alpha-D-muramoyl-L-alanyl-D-glutamyl-meso-2,6-diaminopimeloyl-D-alanyl-D-alanine + UMP. The protein operates within cell wall biogenesis; peptidoglycan biosynthesis. In terms of biological role, catalyzes the initial step of the lipid cycle reactions in the biosynthesis of the cell wall peptidoglycan: transfers peptidoglycan precursor phospho-MurNAc-pentapeptide from UDP-MurNAc-pentapeptide onto the lipid carrier undecaprenyl phosphate, yielding undecaprenyl-pyrophosphoryl-MurNAc-pentapeptide, known as lipid I. This chain is Phospho-N-acetylmuramoyl-pentapeptide-transferase, found in Dechloromonas aromatica (strain RCB).